Reading from the N-terminus, the 477-residue chain is Myc-associated zinc finger protein (477 aa).

Disordered stretches follow at residues 59–78 (AQSPFQAAPAPPPTPQAPAA) and 121–146 (TVDTAALKQPPAPPPPPPPVSAPAAE). Residues 130–141 (PPAPPPPPPPVS) are compositionally biased toward pro residues. C2H2-type zinc fingers lie at residues 190–212 (YICALCAKEFKNGYNLRRHEAIH), 279–301 (HACEMCGKAFRDVYHLNRHKLSH), 307–329 (YQCPVCQQRFKRKDRMSYHVRSH), and 337–360 (YNCSHCGKSFSRPDHLNSHVRQVH). S361 carries the post-translational modification Phosphoserine. A C2H2-type 5 zinc finger spans residues 366–388 (FKCEKCEAAFATKDRLRAHTVRH). The segment at 392–413 (VPCHVCGKMLSSAYISDHMKVH) adopts a C2H2-type 6; atypical zinc-finger fold.

In terms of assembly, interacts with BPTF. As to quaternary structure, forms a heterodimer with MAZ isoform 2; the interaction inhibits MAZ isoform 1-mediated transcription activation. Forms a heterodimer with MAZ isoform 1; the interaction inhibits MAZ isoform 1-mediated transcription activation. Present in kidney, liver and brain. In the brain, highest levels are found in motor cortex and midfrontal cortex (at protein level). As to expression, expressed in the heart, brain, placenta, lung, liver, skeletal muscle and weakly expressed in the kidney. Expressed in the joint synovium.

The protein localises to the nucleus. Its function is as follows. Transcriptional regulator, potentially with dual roles in transcription initiation and termination. Binds DNA and functions as a transcriptional activator. Binds to two G/A-rich sites, ME1a1 and ME1a2, within the MYC promoter having greater affinity for the former. Also binds to multiple G/C-rich sites within the promoter of the Sp1 family of transcription factors. Functionally, binds DNA and functions as a transcriptional activator. Inhibits MAZ isoform 1-mediated transcription. In terms of biological role, binds DNA and functions as a transcriptional activator. This is Myc-associated zinc finger protein (MAZ) from Homo sapiens (Human).